The chain runs to 189 residues: Elongation factor P (189 aa).

Lys34 is subject to N6-(3,6-diaminohexanoyl)-5-hydroxylysine.

It belongs to the elongation factor P family. Post-translationally, may be beta-lysylated on the epsilon-amino group of Lys-34 by the combined action of EpmA and EpmB, and then hydroxylated on the C5 position of the same residue by EpmC (if this protein is present). Lysylation is critical for the stimulatory effect of EF-P on peptide-bond formation. The lysylation moiety may extend toward the peptidyltransferase center and stabilize the terminal 3-CCA end of the tRNA. Hydroxylation of the C5 position on Lys-34 may allow additional potential stabilizing hydrogen-bond interactions with the P-tRNA.

The protein resides in the cytoplasm. Its pathway is protein biosynthesis; polypeptide chain elongation. Its function is as follows. Involved in peptide bond synthesis. Alleviates ribosome stalling that occurs when 3 or more consecutive Pro residues or the sequence PPG is present in a protein, possibly by augmenting the peptidyl transferase activity of the ribosome. Modification of Lys-34 is required for alleviation. The polypeptide is Elongation factor P (Nitrosococcus oceani (strain ATCC 19707 / BCRC 17464 / JCM 30415 / NCIMB 11848 / C-107)).